Reading from the N-terminus, the 156-residue chain is ATP synthase subunit b (156 aa).

Residues 12–32 traverse the membrane as a helical segment; the sequence is VAFLIFVLFCMKFVWPPVIAA.

The protein belongs to the ATPase B chain family. In terms of assembly, F-type ATPases have 2 components, F(1) - the catalytic core - and F(0) - the membrane proton channel. F(1) has five subunits: alpha(3), beta(3), gamma(1), delta(1), epsilon(1). F(0) has three main subunits: a(1), b(2) and c(10-14). The alpha and beta chains form an alternating ring which encloses part of the gamma chain. F(1) is attached to F(0) by a central stalk formed by the gamma and epsilon chains, while a peripheral stalk is formed by the delta and b chains.

It localises to the cell inner membrane. Functionally, f(1)F(0) ATP synthase produces ATP from ADP in the presence of a proton or sodium gradient. F-type ATPases consist of two structural domains, F(1) containing the extramembraneous catalytic core and F(0) containing the membrane proton channel, linked together by a central stalk and a peripheral stalk. During catalysis, ATP synthesis in the catalytic domain of F(1) is coupled via a rotary mechanism of the central stalk subunits to proton translocation. Its function is as follows. Component of the F(0) channel, it forms part of the peripheral stalk, linking F(1) to F(0). The chain is ATP synthase subunit b from Pseudomonas fluorescens (strain Pf0-1).